A 995-amino-acid chain; its full sequence is DExH-box ATP-dependent RNA helicase DExH10 (995 aa).

Residues 1 to 42 are disordered; sequence MSAQMEEPETLGKRKESESSKLRSDETPTPEPRTKRRSLKRA. S2 bears the N-acetylserine mark. The span at 10 to 26 shows a compositional bias: basic and acidic residues; it reads TLGKRKESESSKLRSDE. The Helicase ATP-binding domain occupies 90–246; the sequence is VACLERKESI…WICYLHKQPC (157 aa). 103-110 lines the ATP pocket; the sequence is AHTSAGKT. Residues 194 to 197 carry the DEIH box motif; sequence DEIH. The tract at residues 290–318 is disordered; it reads DTFPKPKSNDGKKSANGKSGGRGAKGGGG. The segment covering 307-318 has biased composition (gly residues); it reads KSGGRGAKGGGG. In terms of domain architecture, Helicase C-terminal spans 323-524; sequence DVYKIVKMIM…LSYYTILNLL (202 aa).

The protein belongs to the DExH box helicase family. SKI2 subfamily. Expressed in inflorescences, leaves, stems, and roots.

The protein localises to the nucleus. Its subcellular location is the nucleoplasm. It carries out the reaction ATP + H2O = ADP + phosphate + H(+). In terms of biological role, ATP-dependent RNA helicase that associates with the RNA exosome complex, with the cap binding complex (CBC) and with the NEXT-like complex. Involved in the degradation of a large number of non-coding nuclear exosome substrates such as snoRNA and miRNA precursors, incompletely spliced mRNAs, and spurious transcripts produced from pseudogenes and intergenic regions. Involved in the maintenance of homeotic B and C gene expression in the reproductive whorls. Regulates floral organ spacing and identity, probably through the regulation of protein synthesis or mRNA degradation. This is DExH-box ATP-dependent RNA helicase DExH10 from Arabidopsis thaliana (Mouse-ear cress).